The sequence spans 631 residues: Plastidic ATP/ADP-transporter (631 aa).

The next 11 membrane-spanning stretches (helical) occupy residues 106–126 (IELVTLKKIIPLGAMFFCILF), 149–169 (IIPFLKTWVNLPMAIGFMLLY), 180–200 (ALFYTVILPFIAFFGAFGFVL), 238–258 (LFYVMAELWGSVVVSVLFWGF), 271–290 (FYPLFGLGANVALIFSGRTV), 313–333 (GMMSIVVMMGGAICFFYWWVN), 369–389 (LATLVVAYGISINLVEVTWKS), 407–427 (DFSTATGIATFTMMLLSQWIF), 442–462 (VLLLTGVGFFSLLLFGAPLAP), 465–485 (AKFGMTPLLAAVYVGAMQNIF), and 543–563 (LASSTPYLGGVLLVIVLAWLG). The tract at residues 586 to 631 (ERASLKIPVVSQNENGNGPLSSESSLNPAGGDSTNASSEPSSPRSL) is disordered. Positions 595–631 (VSQNENGNGPLSSESSLNPAGGDSTNASSEPSSPRSL) are enriched in polar residues.

This sequence belongs to the ADP/ATP translocase tlc (TC 2.A.12.2) family.

The protein localises to the plastid. It is found in the chloroplast membrane. The polypeptide is Plastidic ATP/ADP-transporter (Solanum tuberosum (Potato)).